A 595-amino-acid chain; its full sequence is Fructan 1-exohydrolase (595 aa).

Residues 1–20 (MAQAWAFLLPLLVLGSYVTS) form the signal peptide. Asp74 is an active-site residue. N-linked (GlcNAc...) asparagine glycans are attached at residues Asn167, Asn235, and Asn247. An intrachain disulfide couples Cys445 to Cys491. Residue Asn566 is glycosylated (N-linked (GlcNAc...) asparagine).

Belongs to the glycosyl hydrolase 32 family.

The enzyme catalyses Hydrolysis of terminal, non-reducing (2-&gt;1)-linked beta-D-fructofuranose residues in fructans.. Inhibited by sucrose. Hydrolyzes inulin-type beta-(2,1)-fructans. May play a role as a beta-(2,1)-trimmer during graminan biosynthesis. The chain is Fructan 1-exohydrolase from Aegilops speltoides (Goatgrass).